We begin with the raw amino-acid sequence, 400 residues long: MEWNGLKMIISTMEPQVSNGPTSNTSNGPSSNSRNCPSPMQTGAATDDSKTNLIVNYLPQNMTQEEFRSLFGSIGEIESCKLVRDKITGTQFEEHFKDLATGTKWKPLTEEGPIFGKGQSLGYGFVNYIDPKDAEKAINTLNGLRLQTKTIKVSYARPSSASIRDANLYVSGLPKTMTQKELEQLFSQYGRIITSRILVDQVTGVSRGVGFIRFDKRIEAEEAIKGLNGQKPSGAAEPITVKFANNPSQKTSQALLSQLYQSPNRRYPGPLHHQAQRFRLDNLLNMAYGVKRFSPITIDGMTSLVGMNIPGHTGTGWCIFVYNLSPDSDESVLWQLFGPFGAVNNVKVIRDFNTNKCKGFGFVTMTNYDEAAMAIASLNGYRLGDRVLQVSFKTNKTHKS.

Positions 12–48 are disordered; that stretch reads TMEPQVSNGPTSNTSNGPSSNSRNCPSPMQTGAATDD. Positions 18 to 33 are enriched in low complexity; the sequence is SNGPTSNTSNGPSSNS. Residues 34-44 show a composition bias toward polar residues; that stretch reads RNCPSPMQTGA. RRM domains follow at residues 51–158, 166–246, and 317–395; these read TNLI…YARP, ANLY…FANN, and WCIF…FKTN.

Belongs to the RRM elav family.

It localises to the cytoplasm. The protein localises to the perikaryon. Its subcellular location is the cell projection. The protein resides in the axon. It is found in the dendrite. It localises to the growth cone. Functionally, RNA-binding protein that is involved in the post-transcriptional regulation of mRNAs. Plays a role in the regulation of mRNA stability, alternative splicing and translation. Binds to AU-rich element (ARE) sequences in the 3' untranslated region (3'UTR) of target mRNAs. Mainly plays a role in neuron-specific RNA processing. This Xenopus tropicalis (Western clawed frog) protein is ELAV-like protein 4 (elavl4).